A 573-amino-acid polypeptide reads, in one-letter code: MGHNSDKLYVTHSEHAAGSHTASSFGKRQETGKSEFQRLPFDCCALSLQPFKNPVAVISETKAGEAPRADVFDLLNIVPYIRKFKSNPVTGKPLETSQLIKLNFSRNAEGNLHDPITYKVFSPHIHIVFLKNTGNVFDMASLQLLAIKPKTWRDLVNDEPFKRKDIITIQDPENLAARDLREYDYVKKDLKVSEDELAGDPLRGINVDAAGGASKVLKMIAEKNKSGQSPAPTPSKIDDGKGQEKKEGVVAKRKVEQMAYNASNYSSGRAAASLTSTSLMPETKSERAMFDEEEYMFEELSRPTKDKERQKSKAYATITTNFGPLNVELHGDRAPKTVYNFVQLAKAGKYDNVVFHRLIPGFMVQGGDPTGTGRGGESYWGEPFRDEHGEKGAYKHDSRGVLSMANSGPRTNGSQFFFTFRPTPHLDGKHTVFGKLVGGEETLDKIERVNVRPGGDRPVRDIVIQGVTVLQDPFEAYQARLQARLARQDQSDAALKRRAEAQKEREKDRTTWLGTKLGEKGAVGKRRMEEDVGVGKYLKVGGEAGQRTTLDVVDYGVEKKKKKAGGFGDFSGW.

Residues 37–119 (QRLPFDCCAL…GNLHDPITYK (83 aa)) form the U-box domain. The interval 223 to 247 (KNKSGQSPAPTPSKIDDGKGQEKKE) is disordered. Basic and acidic residues predominate over residues 236 to 247 (KIDDGKGQEKKE). Residues 312–469 (SKAYATITTN…RDIVIQGVTV (158 aa)) enclose the PPIase cyclophilin-type domain. The segment covering 489–510 (DQSDAALKRRAEAQKEREKDRT) has biased composition (basic and acidic residues). The disordered stretch occupies residues 489 to 515 (DQSDAALKRRAEAQKEREKDRTTWLGT).

Belongs to the cyclophilin-type PPIase family. PPIL2 subfamily.

Its subcellular location is the nucleus. The catalysed reaction is [protein]-peptidylproline (omega=180) = [protein]-peptidylproline (omega=0). The enzyme catalyses S-ubiquitinyl-[E2 ubiquitin-conjugating enzyme]-L-cysteine + [acceptor protein]-L-lysine = [E2 ubiquitin-conjugating enzyme]-L-cysteine + N(6)-ubiquitinyl-[acceptor protein]-L-lysine.. Its pathway is protein modification; protein ubiquitination. In terms of biological role, may catalyze the cis-trans isomerization of proline imidic peptide bonds in oligopeptides thereby assisting the folding of proteins. May also function as a chaperone, playing a role in intracellular transport of proteins. May also have a protein ubiquitin ligase activity acting as an E3 ubiquitin protein ligase or as a ubiquitin-ubiquitin ligase promoting elongation of ubiquitin chains on proteins. The sequence is that of Peptidyl-prolyl cis-trans isomerase-like 2 (CYP8) from Cryptococcus neoformans var. neoformans serotype D (strain B-3501A) (Filobasidiella neoformans).